A 563-amino-acid polypeptide reads, in one-letter code: Serine palmitoyltransferase 3 (563 aa).

Polar residues predominate over residues 1–29 (MANLNDSAVTNGTLHNPKTQQGKRQSTGC). Residues 1-32 (MANLNDSAVTNGTLHNPKTQQGKRQSTGCVKN) form a disordered region. The chain crosses the membrane as a helical span at residues 59-79 (PLYVYVLTYMGYGIGILFGYL). The residue at position 371 (Lys-371) is an N6-(pyridoxal phosphate)lysine.

The protein belongs to the class-II pyridoxal-phosphate-dependent aminotransferase family. Component of the serine palmitoyltransferase (SPT) complex, which is composed of SPTLC1, SPTLC2 or SPTLC3 and SPTSSA or SPTSSB. The heterodimer consisting of SPTLC1 and SPTLC2/SPTLC3 forms the catalytic core of the enzyme, while SPTSSA or SPTSSB subunits determine substrate specificity. SPT also interacts with ORMDL proteins, especially ORMDL3, which negatively regulate SPT activity in the presence of ceramides. The cofactor is pyridoxal 5'-phosphate. Expressed in white and brown adipose tissues.

The protein resides in the endoplasmic reticulum membrane. It carries out the reaction L-serine + hexadecanoyl-CoA + H(+) = 3-oxosphinganine + CO2 + CoA. The catalysed reaction is dodecanoyl-CoA + L-serine + H(+) = 3-oxotetradecasphinganine + CO2 + CoA. The enzyme catalyses tetradecanoyl-CoA + L-serine + H(+) = 3-oxohexadecasphinganine + CO2 + CoA. It catalyses the reaction octadecanoyl-CoA + L-serine + H(+) = 3-oxoeicosasphinganine + CO2 + CoA. It participates in lipid metabolism; sphingolipid metabolism. Its activity is regulated as follows. SPT complex catalytic activity is negatively regulated by ORMDL proteins, including ORMDL3, in the presence of ceramides. This mechanism allows to maintain ceramide levels at sufficient concentrations for the production of complex sphingolipids, but which prevents the accumulation of ceramides to levels that trigger apoptosis. Functionally, component of the serine palmitoyltransferase multisubunit enzyme (SPT) that catalyzes the initial and rate-limiting step in sphingolipid biosynthesis by condensing L-serine and activated acyl-CoA (most commonly palmitoyl-CoA) to form long-chain bases. The SPT complex is composed of SPTLC1, SPTLC2 or SPTLC3 and SPTSSA or SPTSSB. Within this complex, the heterodimer consisting of SPTLC1 and SPTLC2/SPTLC3 forms the catalytic core. The composition of the serine palmitoyltransferase (SPT) complex determines the substrate preference. The SPTLC1-SPTLC2-SPTSSA complex shows a strong preference for C16-CoA substrate, while the SPTLC1-SPTLC3-SPTSSA isozyme uses both C14-CoA and C16-CoA as substrates, with a slight preference for C14-CoA. The SPTLC1-SPTLC2-SPTSSB complex shows a strong preference for C18-CoA substrate, while the SPTLC1-SPTLC3-SPTSSB isozyme displays an ability to use a broader range of acyl-CoAs, without apparent preference. The sequence is that of Serine palmitoyltransferase 3 from Mus musculus (Mouse).